A 1102-amino-acid polypeptide reads, in one-letter code: Carbamoyl phosphate synthase large chain (1102 aa).

Positions 1–408 (MPKRTDIQSV…ALQKALRSLE (408 aa)) are carboxyphosphate synthetic domain. R129, R175, G181, G182, E214, I216, E221, G247, V248, H249, Q291, and E305 together coordinate ATP. Residues 138–334 (AVRAKIGHGE…IAKIAAKLAV (197 aa)) form the ATP-grasp 1 domain. Q291, E305, and N307 together coordinate Mg(2+). Mn(2+) contacts are provided by Q291, E305, and N307. The segment at 409 to 551 (KKGSQFTFVG…YFYSSYDEES (143 aa)) is oligomerization domain. The segment at 552-954 (EVAPREKPAV…AYAKSQAGAY (403 aa)) is carbamoyl phosphate synthetic domain. Residues 682–873 (GQVLAEAGLP…LAKAAARISL (192 aa)) form the ATP-grasp 2 domain. 10 residues coordinate ATP: R718, R757, L759, E764, G789, I790, H791, S792, Q832, and E844. Q832, E844, and N846 together coordinate Mg(2+). Residues Q832, E844, and N846 each contribute to the Mn(2+) site. The MGS-like domain occupies 955-1100 (GPLPTKGRAF…QEHAEHLTAA (146 aa)). Positions 955–1102 (GPLPTKGRAF…HAEHLTAARD (148 aa)) are allosteric domain.

It belongs to the CarB family. As to quaternary structure, composed of two chains; the small (or glutamine) chain promotes the hydrolysis of glutamine to ammonia, which is used by the large (or ammonia) chain to synthesize carbamoyl phosphate. Tetramer of heterodimers (alpha,beta)4. It depends on Mg(2+) as a cofactor. Mn(2+) is required as a cofactor.

It carries out the reaction hydrogencarbonate + L-glutamine + 2 ATP + H2O = carbamoyl phosphate + L-glutamate + 2 ADP + phosphate + 2 H(+). The catalysed reaction is hydrogencarbonate + NH4(+) + 2 ATP = carbamoyl phosphate + 2 ADP + phosphate + 2 H(+). Its pathway is amino-acid biosynthesis; L-arginine biosynthesis; carbamoyl phosphate from bicarbonate: step 1/1. It functions in the pathway pyrimidine metabolism; UMP biosynthesis via de novo pathway; (S)-dihydroorotate from bicarbonate: step 1/3. Functionally, large subunit of the glutamine-dependent carbamoyl phosphate synthetase (CPSase). CPSase catalyzes the formation of carbamoyl phosphate from the ammonia moiety of glutamine, carbonate, and phosphate donated by ATP, constituting the first step of 2 biosynthetic pathways, one leading to arginine and/or urea and the other to pyrimidine nucleotides. The large subunit (synthetase) binds the substrates ammonia (free or transferred from glutamine from the small subunit), hydrogencarbonate and ATP and carries out an ATP-coupled ligase reaction, activating hydrogencarbonate by forming carboxy phosphate which reacts with ammonia to form carbamoyl phosphate. This is Carbamoyl phosphate synthase large chain from Streptomyces avermitilis (strain ATCC 31267 / DSM 46492 / JCM 5070 / NBRC 14893 / NCIMB 12804 / NRRL 8165 / MA-4680).